The chain runs to 442 residues: MAATDLERISNAEPEPRSLSLGGHVGFDSLPDQLVSKSVTQGFSFNILCVGETGIGKSTLMNTFFNTTFETEEASHHEECVRLRPQTYDLQESNVHLKLTIVDAVGFGDQINKDDSYRPIVDYIDTQFENYLQEELKIRRSLFDYHDTRIHVCLYFITPTGHSLKSLDLVTMKKLDSKVNIIPIIAKADTISKSELHKFKIKIMGELVSNGVQIYQFPTDDEAVAEINAVMNAHLPFAVVGSTEEVKVGNKLVRARQYPWGVVQVENENHCDFVKLREMLIRVNMEDLREQTHSRHYELYRRCKLEEMGFQDSDGDSQPFSLQETYEAKRKEFLSELQRKEEEMRQMFVNKVKETELELKEKERELHEKFEHLKRIHQEEKRKVEEKRRELEEETNAFNCRKAAMEALQSQALHATSQQPLRKDKDKKKVGGWSSIYSVTIP.

The span at 1-16 shows a compositional bias: basic and acidic residues; it reads MAATDLERISNAEPEP. Positions 1-21 are disordered; that stretch reads MAATDLERISNAEPEPRSLSL. An N-acetylalanine modification is found at Ala2. Residue Ser10 is modified to Phosphoserine. Positions 41–307 constitute a Septin-type G domain; the sequence is QGFSFNILCV…ELYRRCKLEE (267 aa). A G1 motif region spans residues 51–58; sequence GETGIGKS. Residues 51–58, Gly106, 187–195, Gly241, and Arg256 each bind GTP; these read GETGIGKS and KADTISKSE. The tract at residues 103–106 is G3 motif; sequence DAVG. The segment at 186-189 is G4 motif; the sequence is AKAD. The stretch at 322-407 forms a coiled coil; it reads LQETYEAKRK…FNCRKAAMEA (86 aa). The segment covering 411–420 has biased composition (polar residues); that stretch reads QALHATSQQP. Positions 411–442 are disordered; it reads QALHATSQQPLRKDKDKKKVGGWSSIYSVTIP.

It belongs to the TRAFAC class TrmE-Era-EngA-EngB-Septin-like GTPase superfamily. Septin GTPase family. As to quaternary structure, septins polymerize into heterooligomeric protein complexes that form filaments, and can associate with cellular membranes, actin filaments and microtubules. GTPase activity is required for filament formation. Interacts with SEPTIN7. Interacts with CDK14, SEPTIN4 and SEPTIN5. Interacts with VAMP2; the interaction inhibits interaction of VAMP2 with SYP. Interacts with STX1A. As to expression, expressed in cerebrum, hippocampus and cerebellum (at protein level). Expressed in heart (at protein level).

It localises to the cytoplasm. Its subcellular location is the cytoskeleton. The protein resides in the synapse. The protein localises to the cell projection. It is found in the axon. It localises to the cytoplasmic vesicle. Its subcellular location is the secretory vesicle. The protein resides in the synaptic vesicle membrane. The protein localises to the presynapse. Its function is as follows. Filament-forming cytoskeletal GTPase. May play a role in platelet secretion. Seems to participate in the process of SNARE complex formation in synaptic vesicles. The sequence is that of Septin-8 from Rattus norvegicus (Rat).